Reading from the N-terminus, the 318-residue chain is Pseudouridine-5'-phosphate glycosidase 1 (318 aa).

The Proton donor role is filled by glutamate 29. Substrate is bound by residues lysine 90 and valine 110. Aspartate 142 is a binding site for Mn(2+). Residue 144–146 participates in substrate binding; it reads SAD. Lysine 163 (nucleophile) is an active-site residue.

It belongs to the pseudouridine-5'-phosphate glycosidase family. Homotrimer. Mn(2+) serves as cofactor.

It catalyses the reaction D-ribose 5-phosphate + uracil = psi-UMP + H2O. In terms of biological role, catalyzes the reversible cleavage of pseudouridine 5'-phosphate (PsiMP) to ribose 5-phosphate and uracil. Functions biologically in the cleavage direction, as part of a pseudouridine degradation pathway. This Photorhabdus laumondii subsp. laumondii (strain DSM 15139 / CIP 105565 / TT01) (Photorhabdus luminescens subsp. laumondii) protein is Pseudouridine-5'-phosphate glycosidase 1.